Reading from the N-terminus, the 207-residue chain is Small ribosomal subunit protein uS4c (207 aa).

Residues 92–153 (MRLDNILFRL…PKIYQSIITK (62 aa)) enclose the S4 RNA-binding domain.

It belongs to the universal ribosomal protein uS4 family. As to quaternary structure, part of the 30S ribosomal subunit. Contacts protein S5. The interaction surface between S4 and S5 is involved in control of translational fidelity.

It localises to the plastid. The protein localises to the chloroplast. Functionally, one of the primary rRNA binding proteins, it binds directly to 16S rRNA where it nucleates assembly of the body of the 30S subunit. In terms of biological role, with S5 and S12 plays an important role in translational accuracy. The sequence is that of Small ribosomal subunit protein uS4c (rps4) from Equisetum bogotense (Horsetail).